The chain runs to 885 residues: MGCLGNQLLIALLLVSVLEICCVQYVTVFYGVPAWKNATIPLFCATKNRDTWGTTQCLPDNDDYSELAINVTEAFDAWDNTVTEQAIEDVWNLFETSIKPCVKLTPLCIAMRCNKTETDRWGLTGNAGTTTTAITTTATPSVAENVINESNPCIKNNSCAGLEQEPMIGCKFNMTGLNRDKKKEYNETWYSRDLICEQSANESESKCYMHHCNTSVIQESCDKHYWDAIRFRYCAPPGYALLRCNDSNYLGFAPNCSKVVVSSCTRMMETQTSTWFGFNGTRAENRTYIYWHGKSNRTIISLNKYYNLTMRCRRPENKTVLPVTIMSGLVFHSQPINERPKQAWCWFEGSWKKAIQEVKETLVKHPRYTGTNDTRKINLTAPAGGDPEVTFMWTNCRGEFLYCKMNWFLNWVEDRDQKGGRWKQQNRKEQQKKNYVPCHIRQIINTWHKVGKNVYLPPREGDLTCNSTVTSLIAEIDWINSNETNITMSAEVAELYRLELGDYKLIEITPIGLAPTSVRRYTTTGASRNKRGVFVLGFLGFLATAGSAMGAASVTLSAQSRTLLAGIVQQQQQLLDVVKRQQELLRLTVWGTKNLQTRVTAIEKYLKDQAQLNSWGCAFRQVCHTTVPWPNETLVPNWNNMTWQEWERQVDFLEANITQLLEEAQIQQEKNMYELQKLNSWDIFGNWFDLTSWIRYIQYGVLIVLGVIGLRIVIYVVQMLARLRQGYRPVFSSPPAYVQQIPIHKGQEPPTKEGEEGDGGDRGGSRSWPWQIEYIHFLIRQLIRLLTWLFSSCRDWLLRSYQILQPVLQSLSTTLQRVREVIRIEIAYLQYGWRYFQEAVQAWWKLARETLASAWGDIWETLGRVGRGILAIPRRIRQGLELTLL.

The signal sequence occupies residues 1–23 (MGCLGNQLLIALLLVSVLEICCV). Over 24-700 (QYVTVFYGVP…TSWIRYIQYG (677 aa)) the chain is Extracellular. Residue asparagine 37 is glycosylated (N-linked (GlcNAc...) asparagine; by host). Cysteine 44 and cysteine 57 form a disulfide bridge. 17 N-linked (GlcNAc...) asparagine; by host glycosylation sites follow: asparagine 70, asparagine 114, asparagine 148, asparagine 156, asparagine 173, asparagine 186, asparagine 201, asparagine 213, asparagine 245, asparagine 255, asparagine 279, asparagine 285, asparagine 296, asparagine 307, asparagine 317, asparagine 372, and asparagine 378. 5 disulfide bridges follow: cysteine 101-cysteine 221, cysteine 108-cysteine 212, cysteine 113-cysteine 170, cysteine 234-cysteine 264, and cysteine 244-cysteine 256. A V1 region spans residues 113 to 169 (CNKTETDRWGLTGNAGTTTTAITTTATPSVAENVINESNPCIKNNSCAGLEQEPMIG). Residues 170–212 (CKFNMTGLNRDKKKEYNETWYSRDLICEQSANESESKCYMHHC) are V2. The tract at residues 312-344 (CRRPENKTVLPVTIMSGLVFHSQPINERPKQAW) is V3. An intrachain disulfide couples cysteine 312 to cysteine 345. 2 disulfide bridges follow: cysteine 396-cysteine 465 and cysteine 403-cysteine 438. Residues 403 to 438 (CKMNWFLNWVEDRDQKGGRWKQQNRKEQQKKNYVPC) are V4. 3 N-linked (GlcNAc...) asparagine; by host glycosylation sites follow: asparagine 466, asparagine 482, and asparagine 485. The segment at 481–488 (SNETNITM) is V5. The tract at residues 532–552 (GVFVLGFLGFLATAGSAMGAA) is fusion peptide. The interval 595-611 (LQTRVTAIEKYLKDQAQ) is immunosuppression. 3 N-linked (GlcNAc...) asparagine; by host glycosylation sites follow: asparagine 631, asparagine 640, and asparagine 656. A coiled-coil region spans residues 640–672 (NMTWQEWERQVDFLEANITQLLEEAQIQQEKNM). Residues 677–698 (KLNSWDIFGNWFDLTSWIRYIQ) are MPER; binding to GalCer. A helical transmembrane segment spans residues 701–721 (VLIVLGVIGLRIVIYVVQMLA). Residues 722 to 885 (RLRQGYRPVF…IRQGLELTLL (164 aa)) are Cytoplasmic-facing. Positions 727–730 (YRPV) match the YXXV motif; contains endocytosis signal motif. The interval 743-764 (IHKGQEPPTKEGEEGDGGDRGG) is disordered. A compositionally biased stretch (basic and acidic residues) spans 745 to 764 (KGQEPPTKEGEEGDGGDRGG). Cysteine 793 carries S-palmitoyl cysteine; by host lipidation. Residues 884–885 (LL) carry the Di-leucine internalization motif motif.

In terms of assembly, the mature envelope protein (Env) consists of a homotrimer of non-covalently associated gp120-gp41 heterodimers. The resulting complex protrudes from the virus surface as a spike. Interacts with host CD4 and CCR5. Gp120 also interacts with the C-type lectins CD209/DC-SIGN and CLEC4M/DC-SIGNR (collectively referred to as DC-SIGN(R)). The mature envelope protein (Env) consists of a homotrimer of non-covalently associated gp120-gp41 heterodimers. The resulting complex protrudes from the virus surface as a spike. In terms of processing, specific enzymatic cleavages in vivo yield mature proteins. Envelope glycoproteins are synthesized as an inactive precursor that is heavily N-glycosylated and processed likely by host cell furin in the Golgi to yield the mature SU and TM proteins. The cleavage site between SU and TM requires the minimal sequence [KR]-X-[KR]-R. Palmitoylation of the transmembrane protein and of Env polyprotein (prior to its proteolytic cleavage) is essential for their association with host cell membrane lipid rafts. Palmitoylation is therefore required for envelope trafficking to classical lipid rafts, but not for viral replication.

The protein localises to the virion membrane. The protein resides in the host cell membrane. It localises to the host endosome membrane. In terms of biological role, the surface protein gp120 (SU) attaches the virus to the host lymphoid cell by binding to the primary receptor CD4. This interaction induces a structural rearrangement creating a high affinity binding site for a chemokine coreceptor like CCR5. This peculiar 2 stage receptor-interaction strategy allows gp120 to maintain the highly conserved coreceptor-binding site in a cryptic conformation, protected from neutralizing antibodies. These changes are transmitted to the transmembrane protein gp41 and are thought to activate its fusogenic potential by unmasking its fusion peptide. Functionally, surface protein gp120 (SU) may target the virus to gut-associated lymphoid tissue (GALT) by binding host ITGA4/ITGB7 (alpha-4/beta-7 integrins), a complex that mediates T-cell migration to the GALT. Interaction between gp120 and ITGA4/ITGB7 would allow the virus to enter GALT early in the infection, infecting and killing most of GALT's resting CD4+ T-cells. This T-cell depletion is believed to be the major insult to the host immune system leading to AIDS. The surface protein gp120 is a ligand for CD209/DC-SIGN and CLEC4M/DC-SIGNR, which are respectively found on dendritic cells (DCs), and on endothelial cells of liver sinusoids and lymph node sinuses. These interactions allow capture of viral particles at mucosal surfaces by these cells and subsequent transmission to permissive cells. DCs are professional antigen presenting cells, critical for host immunity by inducing specific immune responses against a broad variety of pathogens. They act as sentinels in various tissues where they take up antigen, process it, and present it to T-cells following migration to lymphoid organs. SIV subverts the migration properties of dendritic cells to gain access to CD4+ T-cells in lymph nodes. Virus transmission to permissive T-cells occurs either in trans (without DCs infection, through viral capture and transmission), or in cis (following DCs productive infection, through the usual CD4-gp120 interaction), thereby inducing a robust infection. In trans infection, bound virions remain infectious over days and it is proposed that they are not degraded, but protected in non-lysosomal acidic organelles within the DCs close to the cell membrane thus contributing to the viral infectious potential during DCs' migration from the periphery to the lymphoid tissues. On arrival at lymphoid tissues, intact virions recycle back to DCs' cell surface allowing virus transmission to CD4+ T-cells. Virion capture also seems to lead to MHC-II-restricted viral antigen presentation, and probably to the activation of SIV-specific CD4+ cells. Its function is as follows. The transmembrane protein gp41 (TM) acts as a class I viral fusion protein. Under the current model, the protein has at least 3 conformational states: pre-fusion native state, pre-hairpin intermediate state, and post-fusion hairpin state. During fusion of viral and target intracellular membranes, the coiled coil regions (heptad repeats) assume a trimer-of-hairpins structure, positioning the fusion peptide in close proximity to the C-terminal region of the ectodomain. The formation of this structure appears to drive apposition and subsequent fusion of viral and target cell membranes. Complete fusion occurs in host cell endosomes. The virus undergoes clathrin-dependent internalization long before endosomal fusion, thus minimizing the surface exposure of conserved viral epitopes during fusion and reducing the efficacy of inhibitors targeting these epitopes. Membranes fusion leads to delivery of the nucleocapsid into the cytoplasm. In terms of biological role, the envelope glycoprotein gp160 precursor down-modulates cell surface CD4 antigen by interacting with it in the endoplasmic reticulum and blocking its transport to the cell surface. Functionally, the gp120-gp41 heterodimer allows rapid transcytosis of the virus through CD4 negative cells such as simple epithelial monolayers of the intestinal, rectal and endocervical epithelial barriers. Both gp120 and gp41 specifically recognize glycosphingolipids galactosyl-ceramide (GalCer) or 3' sulfo-galactosyl-ceramide (GalS) present in the lipid rafts structures of epithelial cells. Binding to these alternative receptors allows the rapid transcytosis of the virus through the epithelial cells. This transcytotic vesicle-mediated transport of virions from the apical side to the basolateral side of the epithelial cells does not involve infection of the cells themselves. In Cercopithecidae (Old World monkeys), this protein is Envelope glycoprotein gp160 (env).